Reading from the N-terminus, the 104-residue chain is UPF0125 protein PSPTO_4512 (104 aa).

The protein belongs to the UPF0125 (RnfH) family.

The protein is UPF0125 protein PSPTO_4512 of Pseudomonas syringae pv. tomato (strain ATCC BAA-871 / DC3000).